We begin with the raw amino-acid sequence, 275 residues long: Formamidopyrimidine-DNA glycosylase (275 aa).

The active-site Schiff-base intermediate with DNA is the proline 2. The Proton donor role is filled by glutamate 3. Catalysis depends on lysine 58, which acts as the Proton donor; for beta-elimination activity. Residues histidine 92, arginine 111, and arginine 154 each coordinate DNA. An FPG-type zinc finger spans residues 239 to 273 (HVYHRQGLPCQRCGTPIERIKVAQRGTHFCPHCQV). Catalysis depends on arginine 263, which acts as the Proton donor; for delta-elimination activity.

This sequence belongs to the FPG family. As to quaternary structure, monomer. It depends on Zn(2+) as a cofactor.

It carries out the reaction Hydrolysis of DNA containing ring-opened 7-methylguanine residues, releasing 2,6-diamino-4-hydroxy-5-(N-methyl)formamidopyrimidine.. The catalysed reaction is 2'-deoxyribonucleotide-(2'-deoxyribose 5'-phosphate)-2'-deoxyribonucleotide-DNA = a 3'-end 2'-deoxyribonucleotide-(2,3-dehydro-2,3-deoxyribose 5'-phosphate)-DNA + a 5'-end 5'-phospho-2'-deoxyribonucleoside-DNA + H(+). In terms of biological role, involved in base excision repair of DNA damaged by oxidation or by mutagenic agents. Acts as a DNA glycosylase that recognizes and removes damaged bases. Has a preference for oxidized purines, such as 7,8-dihydro-8-oxoguanine (8-oxoG). Has AP (apurinic/apyrimidinic) lyase activity and introduces nicks in the DNA strand. Cleaves the DNA backbone by beta-delta elimination to generate a single-strand break at the site of the removed base with both 3'- and 5'-phosphates. This chain is Formamidopyrimidine-DNA glycosylase, found in Pediococcus pentosaceus (strain ATCC 25745 / CCUG 21536 / LMG 10740 / 183-1w).